Consider the following 123-residue polypeptide: Small ribosomal subunit protein uS12 (123 aa).

3-methylthioaspartic acid is present on D89.

The protein belongs to the universal ribosomal protein uS12 family. As to quaternary structure, part of the 30S ribosomal subunit. Contacts proteins S8 and S17. May interact with IF1 in the 30S initiation complex.

Its function is as follows. With S4 and S5 plays an important role in translational accuracy. Functionally, interacts with and stabilizes bases of the 16S rRNA that are involved in tRNA selection in the A site and with the mRNA backbone. Located at the interface of the 30S and 50S subunits, it traverses the body of the 30S subunit contacting proteins on the other side and probably holding the rRNA structure together. The combined cluster of proteins S8, S12 and S17 appears to hold together the shoulder and platform of the 30S subunit. The sequence is that of Small ribosomal subunit protein uS12 from Maridesulfovibrio salexigens (strain ATCC 14822 / DSM 2638 / NCIMB 8403 / VKM B-1763) (Desulfovibrio salexigens).